Reading from the N-terminus, the 1060-residue chain is Bumetanide-sensitive sodium-(potassium)-chloride cotransporter (1060 aa).

Over Met1–Lys122 the chain is Cytoplasmic. A run of 2 helical transmembrane segments spans residues Leu123–Phe143 and Gly154–Leu174. The Cytoplasmic portion of the chain corresponds to Ser175–Ser197. A run of 2 helical transmembrane segments spans residues Leu198–Ala218 and Ile250–Glu270. The Cytoplasmic segment spans residues Ser271–Asn275. The next 2 helical transmembrane spans lie at Phe276–Pro296 and Phe332–Ile352. Topologically, residues Ser353–Thr367 are cytoplasmic. A helical transmembrane segment spans residues Leu368 to Gly388. N-linked (GlcNAc...) asparagine glycosylation is found at Asn396, Asn404, and Asn419. Residues Val432–Leu452 traverse the membrane as a helical segment. The Cytoplasmic portion of the chain corresponds to Ser453–Leu497. 2 consecutive transmembrane segments (helical) span residues Thr498–Ile518 and Cys563–Phe583. Over Thr584–Pro642 the chain is Cytoplasmic. Residues Ala643 to Ile663 form a helical membrane-spanning segment. N-linked (GlcNAc...) asparagine glycosylation occurs at Asn816. Residues Thr882–Ile902 traverse the membrane as a helical segment. At Ser903–Ser1060 the chain is on the cytoplasmic side.

It belongs to the SLC12A transporter family.

It localises to the membrane. Electrically silent transporter system. Mediates sodium and chloride reabsorption. Plays a vital role in the regulation of ionic balance and cell volume. The sequence is that of Bumetanide-sensitive sodium-(potassium)-chloride cotransporter from Manduca sexta (Tobacco hawkmoth).